The following is a 243-amino-acid chain: Protein GrpE (243 aa).

Belongs to the GrpE family. As to quaternary structure, homodimer.

It is found in the cytoplasm. Participates actively in the response to hyperosmotic and heat shock by preventing the aggregation of stress-denatured proteins, in association with DnaK and GrpE. It is the nucleotide exchange factor for DnaK and may function as a thermosensor. Unfolded proteins bind initially to DnaJ; upon interaction with the DnaJ-bound protein, DnaK hydrolyzes its bound ATP, resulting in the formation of a stable complex. GrpE releases ADP from DnaK; ATP binding to DnaK triggers the release of the substrate protein, thus completing the reaction cycle. Several rounds of ATP-dependent interactions between DnaJ, DnaK and GrpE are required for fully efficient folding. The polypeptide is Protein GrpE (Mycoplasma mobile (strain ATCC 43663 / 163K / NCTC 11711) (Mesomycoplasma mobile)).